The following is a 355-amino-acid chain: Syntaxin-5 (355 aa).

Residues 1-333 (MIPRKRYGSK…KYFQSVTSNR (333 aa)) are Cytoplasmic-facing. Residues 28–37 (PATAGSSSSD) show a composition bias toward polar residues. The interval 28-47 (PATAGSSSSDIAPLPPPVAL) is disordered. An IxM motif; signal for cargo packaging into COPII-coated vesicles motif is present at residues 245–247 (IDM). The t-SNARE coiled-coil homology domain maps to 263-325 (DSYIQSRADT…EAAHSEILKY (63 aa)). Residues 287-318 (FQQLAHMVKEQEETIQRIDENVLGAQLDVEAA) are a coiled coil. Residues 334 to 354 (WLMVKIFLILIVFFIIFVVFL) traverse the membrane as a helical; Anchor for type IV membrane protein segment. A355 is a topological domain (vesicular).

This sequence belongs to the syntaxin family. Part of a ternary complex containing STX5A, NSFL1C and VCP. Part of a unique SNARE complex composed of the Golgi SNAREs GOSR1, GOSR2 and YKT6. This complex also includes VTI1A. Component of a SNARE complex consisting of STX5, YKT6, GOSR1 and BET1L. Interacts with BET1L. Interacts with BET1. Interacts with COG4. Interacts with GM130/GOLGA2. Interacts (via IxM motif) with SEC24C and SEC24D; mediates STX5 packaging into COPII-coated vesicles. Interacts with VLDLR; this interaction mediates VLDLR translocation from the endoplasmic reticulum to the plasma membrane.

The protein localises to the endoplasmic reticulum-Golgi intermediate compartment membrane. The protein resides in the golgi apparatus membrane. Mediates endoplasmic reticulum to Golgi transport. Together with p115/USO1 and GM130/GOLGA2, involved in vesicle tethering and fusion at the cis-Golgi membrane to maintain the stacked and inter-connected structure of the Golgi apparatus. In Bos taurus (Bovine), this protein is Syntaxin-5 (STX5).